The following is a 756-amino-acid chain: Serine/threonine-protein kinase CBK1 (756 aa).

2 disordered regions span residues 1–180 (MYNS…SYSS) and 242–261 (QQQQ…NNGT). Residues 23 to 34 (QQQDQQHQQQQQ) show a composition bias toward low complexity. Residues 53–77 (FSSNYMKEQGSHQSLQEHLQRETGN) show a composition bias toward polar residues. At T109 the chain carries Phosphothreonine. The segment covering 120-180 (HNNNSQSMVQ…TLRSNGSYSS (61 aa)) has biased composition (polar residues). The span at 242–255 (QQQQQQQSQSPVQS) shows a compositional bias: low complexity. One can recognise a Protein kinase domain in the interval 352-672 (FHTVKVIGKG…ADEIKSHPFF (321 aa)). Residues 358–366 (IGKGAFGEV) and K381 each bind ATP. D475 (proton acceptor) is an active-site residue. In terms of domain architecture, AGC-kinase C-terminal spans 673 to 754 (RGVDWNTIRQ…SRFDYLTRKN (82 aa)). Positions 707-732 (NVPDSPAMAQAAKQREQMTKQGGSAP) are disordered.

The protein belongs to the protein kinase superfamily. STE Ser/Thr protein kinase family. COT1 subfamily. In terms of assembly, associates with PAG1/TAO3 and interacts with MOB2.

The catalysed reaction is L-seryl-[protein] + ATP = O-phospho-L-seryl-[protein] + ADP + H(+). It carries out the reaction L-threonyl-[protein] + ATP = O-phospho-L-threonyl-[protein] + ADP + H(+). Its function is as follows. Protein kinase that seems to play a role in the regulation of cell morphogenesis and proliferation. The protein is Serine/threonine-protein kinase CBK1 (CBK1) of Saccharomyces cerevisiae (strain ATCC 204508 / S288c) (Baker's yeast).